A 339-amino-acid polypeptide reads, in one-letter code: Phosphate acyltransferase (339 aa).

Belongs to the PlsX family. In terms of assembly, homodimer. Probably interacts with PlsY.

The protein resides in the cytoplasm. It catalyses the reaction a fatty acyl-[ACP] + phosphate = an acyl phosphate + holo-[ACP]. The protein operates within lipid metabolism; phospholipid metabolism. Functionally, catalyzes the reversible formation of acyl-phosphate (acyl-PO(4)) from acyl-[acyl-carrier-protein] (acyl-ACP). This enzyme utilizes acyl-ACP as fatty acyl donor, but not acyl-CoA. The polypeptide is Phosphate acyltransferase (Vesicomyosocius okutanii subsp. Calyptogena okutanii (strain HA)).